Reading from the N-terminus, the 344-residue chain is Methionine import ATP-binding protein MetN (344 aa).

In terms of domain architecture, ABC transporter spans 7–245 (ISLKKISRCF…PQDDTTIAML (239 aa)). Residue 42 to 49 (GRSGAGKS) coordinates ATP.

Belongs to the ABC transporter superfamily. Methionine importer (TC 3.A.1.24) family. In terms of assembly, the complex is composed of two ATP-binding proteins (MetN), two transmembrane proteins (MetI) and a solute-binding protein (MetQ).

It localises to the cell inner membrane. It carries out the reaction L-methionine(out) + ATP + H2O = L-methionine(in) + ADP + phosphate + H(+). The catalysed reaction is D-methionine(out) + ATP + H2O = D-methionine(in) + ADP + phosphate + H(+). Its function is as follows. Part of the ABC transporter complex MetNIQ involved in methionine import. Responsible for energy coupling to the transport system. This chain is Methionine import ATP-binding protein MetN, found in Bartonella henselae (strain ATCC 49882 / DSM 28221 / CCUG 30454 / Houston 1) (Rochalimaea henselae).